Reading from the N-terminus, the 473-residue chain is Benzoyl-CoA oxygenase component B (473 aa).

This sequence belongs to the benzoyl-CoA oxygenase component B family. As to quaternary structure, monomer. The subunit composition of the active BoxA/BoxB protein complex is not known. It depends on Fe cation as a cofactor.

The enzyme catalyses benzoyl-CoA + NADPH + O2 + H(+) = 2,3-epoxy-2,3-dihydrobenzoyl-CoA + NADP(+) + H2O. Its function is as follows. The BoxA/BoxB complex catalyzes the aerobic reduction/oxygenation of the aromatic ring of benzoyl-CoA to form 2,3-epoxy-2,3-dihydrobenzoyl-CoA. BoxB acts as the benzoyl-CoA oxygenase, after being reduced by the reductase component BoxA. BoxAB does not act on NADH or benzoate. The chain is Benzoyl-CoA oxygenase component B (boxB) from Aromatoleum evansii (Azoarcus evansii).